A 330-amino-acid polypeptide reads, in one-letter code: Ferredoxin--NADP reductase (330 aa).

FAD contacts are provided by Glu-35, Gln-43, Tyr-48, Val-90, Phe-123, Asp-285, and Thr-326.

The protein belongs to the ferredoxin--NADP reductase type 2 family. In terms of assembly, homodimer. FAD is required as a cofactor.

It carries out the reaction 2 reduced [2Fe-2S]-[ferredoxin] + NADP(+) + H(+) = 2 oxidized [2Fe-2S]-[ferredoxin] + NADPH. In Streptococcus agalactiae serotype Ia (strain ATCC 27591 / A909 / CDC SS700), this protein is Ferredoxin--NADP reductase.